The chain runs to 823 residues: MMENYEEIRLGHIRSKDLGNQVPDTTQFYPPTKFDFGAEILASTSTEAEAEAEATATTTEPATSELAGKANGEIKTKTLAAREEQEIGANLEHKTKNPTKSMGEDEDDEEEEEEDDEEEEEDDEEGITGTSNEDEDSSSNCSSSVEPDWKLRWLQREFYTGRVPRQVIASIMPHFATGLAGDTDDSVLWDYLAHLLNEPKRRNKLASVNTFDDVISLVKKSQKIIVLTGAGVSVSCGIPDFRSTNGIYARLAHDFPDLPDPQAMFDINYFKRDPRPFYKFAREIYPGEFQPSPCHRFIKMLETKGKLLRNYTQNIDTLERVAGIQRVIECHGSFSTASCTKCRFKCNADALRADIFAQRIPVCPQCQPNKEQSVDASVAVTEEELRQLVENGIMKPDIVFFGEGLPDEYHTVMATDKDVCDLLIVIGSSLKVRPVAHIPSSIPATVPQILINREQLHHLKFDVELLGDSDVIINQICHRLSDNDDCWRQLCCDESVLTESKELMPPEHSNHHLHHHLLHHRHCSSESERQSQLDTDTQSIKSNSSADYILGSAGTCSDSGFESSTFSCGKRSTAAEAAAIERIKTDILVELNETTALSCDRLGLEGPQTTVESYRHLSIDSSKDSGIEQCDNEATPSYVRPSNLVQETKTVAPSLTPIPQQRGKRQTAAERLQPGTFYSHTNNYSYVFPGAQVFWDNDYSDDDDEEEERSHNRHSDLFGNVGHNYKDDDEDACDLNAVPLSPLLPPSLEAHIVTDIVNGSNEPLPNSSPGQKRTACIIEQQPTPAIETEIPPLKKRRPSEENKQQTQIERSEESPPPGQLAAV.

Low complexity predominate over residues 41–67; the sequence is LASTSTEAEAEAEATATTTEPATSELA. The segment at 41–146 is disordered; the sequence is LASTSTEAEA…SSSNCSSSVE (106 aa). A compositionally biased stretch (basic and acidic residues) spans 72–95; that stretch reads GEIKTKTLAAREEQEIGANLEHKT. Residues 104-137 show a composition bias toward acidic residues; that stretch reads EDEDDEEEEEEDDEEEEEDDEEGITGTSNEDEDS. Residues 204–499 form the Deacetylase sirtuin-type domain; it reads KLASVNTFDD…LCCDESVLTE (296 aa). NAD(+) is bound by residues 229 to 248 and 313 to 316; these read GAGV…NGIY and QNID. The Proton acceptor role is filled by H331. Residues C339, C342, C363, and C366 each coordinate Zn(2+). Residues 427–429, 452–454, and S469 each bind NAD(+); these read GSS and NRE. Phosphoserine is present on residues S618 and S621. The span at 698–707 shows a compositional bias: acidic residues; the sequence is DYSDDDDEEE. 2 disordered regions span residues 698-722 and 777-823; these read DYSD…GNVG and IIEQ…LAAV. A compositionally biased stretch (basic and acidic residues) spans 798-813; that stretch reads PSEENKQQTQIERSEE. Residues 814–823 are compositionally biased toward pro residues; sequence SPPPGQLAAV.

Belongs to the sirtuin family. Class I subfamily. As to quaternary structure, interacts with the transcriptional repressors hairy (hry) and deadpan (dpn); via basic domains. Associates with the Esc/E(z) histone methyltransferase complex. Interacts directly with E(z) and HDAC1/Rpd3. It depends on Zn(2+) as a cofactor.

The protein localises to the cytoplasm. It is found in the nucleus. It localises to the chromosome. It catalyses the reaction N(6)-acetyl-L-lysyl-[protein] + NAD(+) + H2O = 2''-O-acetyl-ADP-D-ribose + nicotinamide + L-lysyl-[protein]. Functionally, NAD-dependent histone deacetylase involved in heterochromatic silencing. Mildly suppresses the heterochromatin-mediated silencing phenomenon known as position-effect variegation (PEV). Required for epigenetic silencing of the polycomb group proteins. Has histone H4 deacetylase activity in vitro. Required maternally for establishing proper segmentation of the embryo. Involved in sex determination. May be involved in the regulation of life span. This is NAD-dependent histone deacetylase sirtuin-1 from Drosophila melanogaster (Fruit fly).